The primary structure comprises 122 residues: Secreted RxLR effector protein RXLR-C251 (122 aa).

The signal sequence occupies residues M1–A24. Residues R48–R51 carry the RxLR motif.

The protein belongs to the RxLR effector family.

It is found in the secreted. It localises to the host cytoplasm. Its subcellular location is the host nucleus. Secreted effector that does not suppress pattern-triggered immunity (PTI) in plant host. This is Secreted RxLR effector protein RXLR-C251 from Plasmopara halstedii (Downy mildew of sunflower).